Reading from the N-terminus, the 951-residue chain is Glycine dehydrogenase (decarboxylating) 1 (951 aa).

Lys703 is modified (N6-(pyridoxal phosphate)lysine).

Belongs to the GcvP family. In terms of assembly, the glycine cleavage system is composed of four proteins: P, T, L and H. It depends on pyridoxal 5'-phosphate as a cofactor.

The catalysed reaction is N(6)-[(R)-lipoyl]-L-lysyl-[glycine-cleavage complex H protein] + glycine + H(+) = N(6)-[(R)-S(8)-aminomethyldihydrolipoyl]-L-lysyl-[glycine-cleavage complex H protein] + CO2. The glycine cleavage system catalyzes the degradation of glycine. The P protein binds the alpha-amino group of glycine through its pyridoxal phosphate cofactor; CO(2) is released and the remaining methylamine moiety is then transferred to the lipoamide cofactor of the H protein. In Pseudomonas fluorescens (strain ATCC BAA-477 / NRRL B-23932 / Pf-5), this protein is Glycine dehydrogenase (decarboxylating) 1.